We begin with the raw amino-acid sequence, 252 residues long: Chitooligosaccharide deacetylase (252 aa).

Residues His-61 and His-125 each contribute to the Mg(2+) site.

This sequence belongs to the YdjC deacetylase family. ChbG subfamily. As to quaternary structure, homodimer. Requires Mg(2+) as cofactor.

The protein resides in the cytoplasm. The enzyme catalyses N,N'-diacetylchitobiose + H2O = N-acetyl-beta-D-glucosaminyl-(1-&gt;4)-D-glucosamine + acetate. It carries out the reaction diacetylchitobiose-6'-phosphate + H2O = N'-monoacetylchitobiose-6'-phosphate + acetate. The protein operates within glycan degradation; chitin degradation. Functionally, involved in the degradation of chitin. ChbG is essential for growth on the acetylated chitooligosaccharides chitobiose and chitotriose but is dispensable for growth on cellobiose and chitosan dimer, the deacetylated form of chitobiose. Deacetylation of chitobiose-6-P and chitotriose-6-P is necessary for both the activation of the chb promoter by the regulatory protein ChbR and the hydrolysis of phosphorylated beta-glucosides by the phospho-beta-glucosidase ChbF. Catalyzes the removal of only one acetyl group from chitobiose-6-P to yield monoacetylchitobiose-6-P, the inducer of ChbR and the substrate of ChbF. This is Chitooligosaccharide deacetylase from Salmonella paratyphi A (strain ATCC 9150 / SARB42).